The primary structure comprises 125 residues: MKPNYSVNTSPKRSDEPIWWGLFGAGGTWFAMLTPITVLVLGILVPLGVIDAEAMSYERVSAFATSIIGALFIIGTLALPMWHAMHRVHHGMHDLKFHTGVIGKVACYAFAGLITALAVIFIFMI.

3 helical membrane passes run 30-50 (FAML…LGVI), 62-82 (AFAT…LPMW), and 105-125 (VACY…IFMI).

It belongs to the FrdD family. In terms of assembly, part of an enzyme complex containing four subunits: a flavoprotein (FrdA), an iron-sulfur protein (FrdB), and two hydrophobic anchor proteins (FrdC and FrdD).

The protein resides in the cell inner membrane. In terms of biological role, anchors the catalytic components of the fumarate reductase complex to the cell membrane, binds quinones. The protein is Fumarate reductase subunit D of Vibrio parahaemolyticus serotype O3:K6 (strain RIMD 2210633).